The following is a 145-amino-acid chain: Ribonuclease VapC24 (145 aa).

Positions Ile-4–Thr-123 constitute a PINc domain. Mg(2+)-binding residues include Asp-5 and Asp-106.

The protein belongs to the PINc/VapC protein family. The cofactor is Mg(2+).

Toxic component of a type II toxin-antitoxin (TA) system. An RNase. Its cognate antitoxin is VapB24. The chain is Ribonuclease VapC24 from Mycobacterium tuberculosis (strain CDC 1551 / Oshkosh).